Reading from the N-terminus, the 346-residue chain is Fructose-1,6-bisphosphatase class 1 (346 aa).

Positions 96, 119, 121, and 122 each coordinate Mg(2+). Residues 122 to 125, Asn-214, Tyr-247, and Lys-277 contribute to the substrate site; that span reads DGSS. Residue Glu-283 participates in Mg(2+) binding.

It belongs to the FBPase class 1 family. As to quaternary structure, homotetramer. It depends on Mg(2+) as a cofactor.

It is found in the cytoplasm. The catalysed reaction is beta-D-fructose 1,6-bisphosphate + H2O = beta-D-fructose 6-phosphate + phosphate. Its pathway is carbohydrate biosynthesis; gluconeogenesis. This Cytophaga hutchinsonii (strain ATCC 33406 / DSM 1761 / CIP 103989 / NBRC 15051 / NCIMB 9469 / D465) protein is Fructose-1,6-bisphosphatase class 1.